A 297-amino-acid polypeptide reads, in one-letter code: Vacuolar protein sorting-associated protein 26C (297 aa).

The protein belongs to the VPS26 family. Component of the commander complex that is essential for endosomal recycling of transmembrane cargos; the commander complex is composed of the CCC subcomplex and the retriever subcomplex. Component of the heterotrimeric retriever complex consisting of VPS26C, VPS29 and VPS35L; within the complex interacts with VPS35L. Interacts with SNX17 (via C-terminus); the interaction is direct and associates SNX17 with the retriever complex. Interacts with SNX31; the interaction is direct.

It localises to the endosome. In terms of biological role, component of the commander complex that is essential for endosomal recycling of transmembrane cargos; the commander complex is composed of the CCC subcomplex and the retriever subcomplex. Component of the retriever complex, which is a heterotrimeric complex related to retromer cargo-selective complex (CSC) and essential for retromer-independent retrieval and recycling of numerous cargos such as integrin alpha-5/beta-1 (ITGA5:ITGB1). The recruitment of the retriever complex to the endosomal membrane involves CCC and WASH complexes. In the endosomes, drives the retriever and recycling of NxxY-motif-containing cargo proteins by coupling to SNX17, a cargo essential for the homeostatic maintenance of numerous cell surface proteins associated with processes that include cell migration, cell adhesion, nutrient supply and cell signaling. This is Vacuolar protein sorting-associated protein 26C from Mus musculus (Mouse).